The following is a 59-amino-acid chain: Large ribosomal subunit protein uL30 (59 aa).

The protein belongs to the universal ribosomal protein uL30 family. Part of the 50S ribosomal subunit.

The polypeptide is Large ribosomal subunit protein uL30 (Desulforamulus reducens (strain ATCC BAA-1160 / DSM 100696 / MI-1) (Desulfotomaculum reducens)).